We begin with the raw amino-acid sequence, 161 residues long: MTIALFPGSFDPITNGHVETAKKAAQMFDKVFVVAMTNTSKKYLFTAEERTAFAKDALKNISNIEVLEKPEELTVKLAHELKANVIVRGVRNSADFLYEQEIAGINKRLAPDINTVLLFSSPDNSFVASSMIKELARFDEDVSQFLPIKAAKALRKKLRHE.

Ser9 is a substrate binding site. ATP is bound by residues 9-10 and His17; that span reads SF. Substrate-binding residues include Lys41, Thr74, and Arg88. ATP-binding positions include 89–91, Glu99, and 124–130; these read GVR and NSFVASS.

It belongs to the bacterial CoaD family. Homohexamer. The cofactor is Mg(2+).

It is found in the cytoplasm. It catalyses the reaction (R)-4'-phosphopantetheine + ATP + H(+) = 3'-dephospho-CoA + diphosphate. Its pathway is cofactor biosynthesis; coenzyme A biosynthesis; CoA from (R)-pantothenate: step 4/5. In terms of biological role, reversibly transfers an adenylyl group from ATP to 4'-phosphopantetheine, yielding dephospho-CoA (dPCoA) and pyrophosphate. The polypeptide is Phosphopantetheine adenylyltransferase (Lactobacillus acidophilus (strain ATCC 700396 / NCK56 / N2 / NCFM)).